Here is a 613-residue protein sequence, read N- to C-terminus: Ribosome-associated molecular chaperone SSB2 (613 aa).

At A2 the chain carries N-acetylalanine. Positions 2–391 (AEGVFQGAIG…ILTGQSTSDE (390 aa)) are nucleotide binding domain (NBD). 16-18 (TTY) contacts ATP. Phosphothreonine is present on T47. ATP contacts are provided by residues K73, 205–207 (GGT), 271–278 (ERAKRTLS), and G342. The tract at residues 392-402 (TKDLLLLDVAP) is inter-domain linker. A substrate binding domain (SBD) region spans residues 403–613 (LSLGVGMQGD…RVVTKAMSSR (211 aa)). The Contributes to ribosome binding signature appears at 428–430 (KRR). Residue T431 is modified to Phosphothreonine. Residues 516 to 612 (SEEIEKMVNQ…KRVVTKAMSS (97 aa)) form a lid domain (SBDalpha) region. The short motif at 574–582 (IEAALSDAL) is the Nuclear export signal element. Residues 601-613 (GLKRVVTKAMSSR) form a required for interaction with ribosomes region.

Belongs to the heat shock protein 70 family. Ssb-type Hsp70 subfamily. Binds to ribosomes. Binds close to the ribosomal tunnel exit via contacts with both ribosomal proteins RPL35, RPL39 and RPL19, and rRNA. Directly interacts with nascent polypeptides. This interaction is dependent on the ribosome-associated complex (RAC). Interacts with SSE1.

The protein resides in the cytoplasm. The catalysed reaction is ATP + H2O = ADP + phosphate + H(+). In terms of biological role, ribosome-bound, Hsp70-type chaperone that assists in the cotranslational folding of newly synthesized proteins in the cytosol. Stimulates folding by interacting with nascent chains, binding to short, largely hydrophobic sequences exposed by unfolded proteins, thereby stabilizing longer, more slowly translated, and aggregation-prone nascent polypeptides and domains that cannot fold stably until fully synthesized. The Hsp70-protein substrate interaction depends on ATP-binding and on allosteric regulation between the NBD and the SBD. The ATP-bound state is characterized by a fast exchange rate of substrate (low affinity state), while in the ADP-bound state exchange is much slower (high affinity state). During the Hsp70 cycle, the chaperone switches between the ATP-bound state (open conformation) and the ADP-bound state (closed conformation) by major conformational rearrangements involving mainly the lid domain. Ssb cooperates with a specific Hsp40/Hsp70 co-chaperone termed the ribosome-associated complex (RAC), which stimulates the ATPase activity of the ribosome-associated pool of Ssbs and switches it to the high affinity substrate binding state. Hsp110 chaperone SSE1 and FES1 act as nucleotide exchange factors that cause substrate release. This chain is Ribosome-associated molecular chaperone SSB2, found in Saccharomyces cerevisiae (strain ATCC 204508 / S288c) (Baker's yeast).